The chain runs to 284 residues: uncharacterized protein (284 aa).

It to E.coli YnjA.

This is an uncharacterized protein from Mycobacterium tuberculosis (strain CDC 1551 / Oshkosh).